Here is a 350-residue protein sequence, read N- to C-terminus: 2-oxoglutarate-dependent ethylene/succinate-forming enzyme (350 aa).

A Fe2OG dioxygenase domain is found at 166–286 (GWHHMRVLRF…RFACAYFHEP (121 aa)). Residues His189 and His268 each coordinate Fe cation.

The protein belongs to the iron/ascorbate-dependent oxidoreductase family. Monomer. Requires Fe(2+) as cofactor.

It catalyses the reaction 2-oxoglutarate + O2 + 2 H(+) = ethene + 3 CO2 + H2O. The catalysed reaction is L-arginine + 2-oxoglutarate + O2 = guanidine + L-glutamate 5-semialdehyde + succinate + CO2. Its pathway is alkene biosynthesis; ethylene biosynthesis via 2-oxoglutarate. With respect to regulation, activated by catalase. Inhibited by chelating reagents such as EDTA and Tiron (4,5-dihydroxy-1,3-benzene disulphonic acid), and by DTNB (5,5'-dithio-bis-2-nitrobenzoate) and hydrogen peroxide. Its function is as follows. Simultaneously catalyzes two reactions, namely formation of ethylene and of succinate from 2-oxoglutarate, with a molar ratio of 2:1. In Pseudomonas savastanoi pv. phaseolicola (Pseudomonas syringae pv. phaseolicola), this protein is 2-oxoglutarate-dependent ethylene/succinate-forming enzyme (efe).